A 482-amino-acid chain; its full sequence is Adenylyltransferase and sulfurtransferase uba4 (482 aa).

The tract at residues 33–57 is disordered; the sequence is EGAALRAQSQKTASANATTGQRTKS. Over residues 39-54 the composition is skewed to polar residues; the sequence is AQSQKTASANATTGQR. Residues Gly-98, Asp-119, 126–130, Lys-143, and 187–188 each bind ATP; these read SNLHR and DN. The Zn(2+) site is built by Cys-236 and Cys-239. Cys-253 acts as the Glycyl thioester intermediate; for adenylyltransferase activity in catalysis. Residues Cys-315 and Cys-318 each coordinate Zn(2+). One can recognise a Rhodanese domain in the interval 366–480; sequence AGAQRHIIDV…WREQVDPDWP (115 aa). The active-site Cysteine persulfide intermediate; for sulfurtransferase activity is Cys-435.

The protein in the N-terminal section; belongs to the HesA/MoeB/ThiF family. UBA4 subfamily. The cofactor is Zn(2+).

It is found in the cytoplasm. It localises to the cytosol. The catalysed reaction is [molybdopterin-synthase sulfur-carrier protein]-C-terminal Gly-Gly + ATP + H(+) = [molybdopterin-synthase sulfur-carrier protein]-C-terminal Gly-Gly-AMP + diphosphate. It carries out the reaction [molybdopterin-synthase sulfur-carrier protein]-C-terminal Gly-Gly-AMP + S-sulfanyl-L-cysteinyl-[cysteine desulfurase] + AH2 = [molybdopterin-synthase sulfur-carrier protein]-C-terminal-Gly-aminoethanethioate + L-cysteinyl-[cysteine desulfurase] + A + AMP + 2 H(+). Its pathway is tRNA modification; 5-methoxycarbonylmethyl-2-thiouridine-tRNA biosynthesis. It functions in the pathway cofactor biosynthesis; molybdopterin biosynthesis. Its function is as follows. Plays a central role in 2-thiolation of mcm(5)S(2)U at tRNA wobble positions of cytosolic tRNA(Lys), tRNA(Glu) and tRNA(Gln). Also essential during biosynthesis of the molybdenum cofactor. Acts by mediating the C-terminal thiocarboxylation of sulfur carriers urm1 and mocs2a. Its N-terminus first activates urm1 and mocs2a as acyl-adenylates (-COAMP), then the persulfide sulfur on the catalytic cysteine is transferred to urm1 and mocs2a to form thiocarboxylation (-COSH) of their C-terminus. The reaction probably involves hydrogen sulfide that is generated from the persulfide intermediate and that acts as a nucleophile towards urm1 and mocs2a. Subsequently, a transient disulfide bond is formed. Does not use thiosulfate as sulfur donor; nfs1 probably acting as a sulfur donor for thiocarboxylation reactions. This Emericella nidulans (strain FGSC A4 / ATCC 38163 / CBS 112.46 / NRRL 194 / M139) (Aspergillus nidulans) protein is Adenylyltransferase and sulfurtransferase uba4.